A 274-amino-acid polypeptide reads, in one-letter code: Large ribosomal subunit protein uL2cz/uL2cy (274 aa).

2 disordered regions span residues 1 to 21 (MAIH…VDSQ) and 224 to 274 (NPVD…RRSK).

Belongs to the universal ribosomal protein uL2 family. As to quaternary structure, part of the 50S ribosomal subunit.

Its subcellular location is the plastid. It is found in the chloroplast. The protein is Large ribosomal subunit protein uL2cz/uL2cy (rpl2-A) of Gossypium hirsutum (Upland cotton).